Consider the following 252-residue polypeptide: Small ribosomal subunit protein eS4 (252 aa).

The region spanning 43-105 (FPLLIIVRDI…TGETYRVIPV (63 aa)) is the S4 RNA-binding domain.

The protein belongs to the eukaryotic ribosomal protein eS4 family.

The chain is Small ribosomal subunit protein eS4 from Staphylothermus marinus (strain ATCC 43588 / DSM 3639 / JCM 9404 / F1).